The primary structure comprises 415 residues: Multidrug resistance protein MdtA (415 aa).

An N-terminal signal peptide occupies residues 1-21 (MKGSYKSRWVIVIVVVIAAIA). The span at 31–47 (DSQSAAPGATKQAQQSP) shows a compositional bias: polar residues. Disordered stretches follow at residues 31–60 (DSQS…GPLA) and 392–415 (EAQS…GARS). The segment covering 399–415 (PEEKATSREYAKKGARS) has biased composition (basic and acidic residues).

It belongs to the membrane fusion protein (MFP) (TC 8.A.1) family. Part of a tripartite efflux system composed of MdtA, MdtB and MdtC.

The protein localises to the cell inner membrane. Functionally, the MdtABC tripartite complex confers resistance against novobiocin and deoxycholate. The sequence is that of Multidrug resistance protein MdtA from Escherichia coli O157:H7.